Here is a 451-residue protein sequence, read N- to C-terminus: Adenylosuccinate synthetase isozyme 2 (451 aa).

GTP is bound by residues 34 to 40 (GDEGKGK) and 62 to 64 (GHT). The Proton acceptor role is filled by Asp35. Asp35 and Gly62 together coordinate Mg(2+). Position 35 (Asp35) interacts with substrate. IMP-binding positions include 35-38 (DEGK), 60-63 (NAGH), Thr157, Arg171, Asn250, Thr265, and Arg329. His63 serves as the catalytic Proton donor. Substrate is bound at residue 325–331 (VTTGRKR). Residues Arg331, 357–359 (KLD), and 439–442 (GVGK) contribute to the GTP site.

Belongs to the adenylosuccinate synthetase family. As to quaternary structure, homodimer. The cofactor is Mg(2+).

It is found in the cytoplasm. The protein resides in the mitochondrion. It carries out the reaction IMP + L-aspartate + GTP = N(6)-(1,2-dicarboxyethyl)-AMP + GDP + phosphate + 2 H(+). It participates in purine metabolism; AMP biosynthesis via de novo pathway; AMP from IMP: step 1/2. Its activity is regulated as follows. Inhibited competitively by AMP and IMP and non-competitively by fructose 1,6-bisphosphate. In terms of biological role, plays an important role in the de novo pathway and in the salvage pathway of purine nucleotide biosynthesis. Catalyzes the first committed step in the biosynthesis of AMP from IMP. The sequence is that of Adenylosuccinate synthetase isozyme 2 from Gallus gallus (Chicken).